The sequence spans 535 residues: 5,6-dihydroxyindole-2-carboxylic acid oxidase (535 aa).

A signal peptide spans 1-23 (MQLPMLLLVSLPLLLNMFKPAEA). At 24–478 (QFPRQCATIE…GPLRVTEMIT (455 aa)) the chain is on the lumenal, melanosome side. 5 disulfide bridges follow: cysteine 29–cysteine 40, cysteine 41–cysteine 64, cysteine 55–cysteine 98, cysteine 100–cysteine 109, and cysteine 112–cysteine 121. Residues asparagine 95 and asparagine 103 are each glycosylated (N-linked (GlcNAc...) asparagine). Asparagine 180 carries N-linked (GlcNAc...) asparagine glycosylation. Residues histidine 191, histidine 214, and histidine 223 each coordinate Zn(2+). Cystine bridges form between cysteine 257/cysteine 260 and cysteine 289/cysteine 302. Residues asparagine 303 and asparagine 349 are each glycosylated (N-linked (GlcNAc...) asparagine). Zn(2+) contacts are provided by histidine 376 and histidine 380. A glycan (N-linked (GlcNAc...) asparagine) is linked at asparagine 384. Histidine 403 provides a ligand contact to Zn(2+). The helical transmembrane segment at 479–499 (IAIVTALVLVAIIFAAAACIV) threads the bilayer. Residues 500-535 (RAKKNRDELHQPLLTDQYQHYSDDYDGIATPSQSVV) are Cytoplasmic-facing.

Belongs to the tyrosinase family. As to quaternary structure, tyrosinase, TYRP1 and TYRP2 may form a multienzyme complex. The cofactor is Cu(2+). It depends on Zn(2+) as a cofactor.

It localises to the melanosome membrane. The enzyme catalyses 2 5,6-dihydroxyindole-2-carboxylate + O2 = 2 indole-5,6-quinone-2-carboxylate + 2 H2O. It functions in the pathway pigment biosynthesis; melanin biosynthesis. In terms of biological role, plays a role in melanin biosynthesis. Catalyzes the oxidation of 5,6-dihydroxyindole-2-carboxylic acid (DHICA) into indole-5,6-quinone-2-carboxylic acid. May regulate or influence the type of melanin synthesized. Also to a lower extent, capable of hydroxylating tyrosine and producing melanin. The sequence is that of 5,6-dihydroxyindole-2-carboxylic acid oxidase (TYRP1) from Gallus gallus (Chicken).